A 463-amino-acid polypeptide reads, in one-letter code: RuvB-like 2 (463 aa).

A2 bears the N-acetylalanine mark. Residue K9 forms a Glycyl lysine isopeptide (Lys-Gly) (interchain with G-Cter in SUMO2) linkage. Residue 77–84 (GQPGTGKT) coordinates ATP. A Phosphoserine modification is found at S437. Glycyl lysine isopeptide (Lys-Gly) (interchain with G-Cter in SUMO2) cross-links involve residues K444 and K456.

This sequence belongs to the RuvB family. As to quaternary structure, forms homohexameric rings. Can form a dodecamer with RUVBL1 made of two stacked hexameric rings; however, even though RUVBL1 and RUVBL2 are present in equimolar ratio, the oligomeric status of each hexamer is not known. Oligomerization may regulate binding to nucleic acids and conversely, binding to nucleic acids may affect the dodecameric assembly. Interaction of the complex with DHX34 results in conformational changes of the N-terminus of the RUVBL2 subunits, resulting in loss of nucleotide binding ability and ATP hydrolysis of the complex. Interacts with the transcriptional activation domain of MYC. Interacts with ATF2. Component of the RNA polymerase II holoenzyme complex. May also act to bridge the LEF1/TCF1-CTNNB1 complex and TBP. Component of the NuA4 histone acetyltransferase complex which contains the catalytic subunit KAT5/TIP60 and the subunits EP400, TRRAP/PAF400, BRD8/SMAP, EPC1, DMAP1/DNMAP1, RUVBL1/TIP49, RUVBL2, ING3, actin, ACTL6A/BAF53A, MORF4L1/MRG15, MORF4L2/MRGX, MRGBP, YEATS4/GAS41, VPS72/YL1 and MEAF6. The NuA4 complex interacts with MYC and the adenovirus E1A protein. RUVBL2 interacts with EP400. Component of a NuA4-related complex which contains EP400, TRRAP/PAF400, SRCAP, BRD8/SMAP, EPC1, DMAP1/DNMAP1, RUVBL1/TIP49, RUVBL2, actin, ACTL6A/BAF53A, VPS72 and YEATS4/GAS41. Interacts with NPAT. Component of the chromatin-remodeling INO80 complex; specifically part of a complex module associated with the helicase ATP-binding and the helicase C-terminal domain of INO80. Component of some MLL1/MLL complex, at least composed of the core components KMT2A/MLL1, ASH2L, HCFC1/HCF1, WDR5 and RBBP5, as well as the facultative components BACC1, CHD8, E2F6, HSP70, INO80C, KANSL1, LAS1L, MAX, MCRS1, MGA, MYST1/MOF, PELP1, PHF20, PRP31, RING2, RUVB1/TIP49A, RUVB2/TIP49B, SENP3, TAF1, TAF4, TAF6, TAF7, TAF9 and TEX10. Interacts with IGHMBP2. Interacts with TELO2. Interacts with HINT1. Component of a SWR1-like complex. Component of the R2TP complex composed at least of RUVBL1, RUVBL2, RPAP3 and PIHD1. Component of the PAQosome complex which is responsible for the biogenesis of several protein complexes and which consists of R2TP complex members RUVBL1, RUVBL2, RPAP3 and PIH1D1, URI complex members PFDN2, PFDN6, PDRG1, UXT and URI1 as well as ASDURF, POLR2E and DNAAF10/WDR92. Interacts with ITFG1. Interacts with ZMYND10. Interacts with WAC; WAC positively regulates MTOR activity by promoting the assembly of the TTT complex composed of TELO2, TTI1 and TTI2 and the RUVBL complex composed of RUVBL1 and RUVBL2 into the TTT-RUVBL complex which leads to the dimerization of the mTORC1 complex and its subsequent activation. Forms a complex with APPL1 and APPL2. Interacts with ZNHIT2 (via HIT-type zinc finger) in the presence of ATP or ADP; shows a stronger interaction in the presence of ADP. The RUVBL1/RUVBL2 complex interacts with ZNHIT1 (via HIT-type zinc finger), ZNHIT3 (via HIT-type zinc finger), ZNHIT6 (via HIT-type zinc finger) and DDX59/ZNHIT5 (via HIT-type zinc finger) in the presence of ADP. Interacts with NOPCHAP1; the interaction is direct and disrupted upon ATP binding. Interacts with SMG1.

The protein localises to the nucleus matrix. The protein resides in the nucleus. Its subcellular location is the nucleoplasm. It is found in the cytoplasm. It localises to the membrane. The protein localises to the dynein axonemal particle. It catalyses the reaction ATP + H2O = ADP + phosphate + H(+). Its function is as follows. Possesses single-stranded DNA-stimulated ATPase and ATP-dependent DNA helicase (5' to 3') activity; hexamerization is thought to be critical for ATP hydrolysis and adjacent subunits in the ring-like structure contribute to the ATPase activity. Component of the NuA4 histone acetyltransferase complex which is involved in transcriptional activation of select genes principally by acetylation of nucleosomal histones H4 and H2A. This modification may both alter nucleosome-DNA interactions and promote interaction of the modified histones with other proteins which positively regulate transcription. This complex may be required for the activation of transcriptional programs associated with oncogene and proto-oncogene mediated growth induction, tumor suppressor mediated growth arrest and replicative senescence, apoptosis, and DNA repair. The NuA4 complex ATPase and helicase activities seem to be, at least in part, contributed by the association of RUVBL1 and RUVBL2 with EP400. NuA4 may also play a direct role in DNA repair when recruited to sites of DNA damage. Component of a SWR1-like complex that specifically mediates the removal of histone H2A.Z/H2AZ1 from the nucleosome. Proposed core component of the chromatin remodeling INO80 complex which exhibits DNA- and nucleosome-activated ATPase activity and catalyzes ATP-dependent nucleosome sliding. Plays an essential role in oncogenic transformation by MYC and also modulates transcriptional activation by the LEF1/TCF1-CTNNB1 complex. May also inhibit the transcriptional activity of ATF2. Involved in the endoplasmic reticulum (ER)-associated degradation (ERAD) pathway where it negatively regulates expression of ER stress response genes. May play a role in regulating the composition of the U5 snRNP complex. The sequence is that of RuvB-like 2 (Ruvbl2) from Mus musculus (Mouse).